Reading from the N-terminus, the 184-residue chain is Coordinator of PRMT5 and differentiation stimulator (184 aa).

Met-1 carries the post-translational modification N-acetylmethionine. Positions 1–14 are enriched in low complexity; sequence MDLQAAGAQAQGAA. Residues 1 to 136 are disordered; that stretch reads MDLQAAGAQA…PYDADDIQES (136 aa). Over residues 42–56 the composition is skewed to basic and acidic residues; sequence SSQERETEKAMDRLA. Ser-66 and Ser-75 each carry phosphoserine. Positions 78–89 are enriched in acidic residues; the sequence is EGFAMDEEDSDG.

In terms of assembly, interacts with PRMT5. Interacts with histone H4; specifically interacts with the N-terminus of histone H4 but not with histone H3. Interacts with CBFB. Found in a complex with PRMT5, RUNX1 and CBFB.

The protein resides in the nucleus. Histone-binding protein required for histone H4 methyltransferase activity of PRMT5. Specifically required for histone H4 'Arg-3' methylation mediated by PRMT5, but not histone H3 'Arg-8' methylation, suggesting that it modulates the substrate specificity of PRMT5. Specifically interacts with the N-terminus of histone H4 but not with histone H3, suggesting that it acts by promoting the association between histone H4 and PRMT5. Involved in CCNE1 promoter repression. Plays a role in muscle cell differentiation by modulating the recruitment of PRMT5 to the promoter of genes involved in the coordination between cell cycle exit and muscle differentiation. This Homo sapiens (Human) protein is Coordinator of PRMT5 and differentiation stimulator (COPRS).